A 291-amino-acid polypeptide reads, in one-letter code: Diaminopimelate epimerase (291 aa).

Positions 17, 50, and 70 each coordinate substrate. Cys-79 (proton donor) is an active-site residue. Substrate contacts are provided by residues 80–81 (GN), Asn-167, Asn-200, and 218–219 (ER). Cys-227 (proton acceptor) is an active-site residue. 228 to 229 (GS) serves as a coordination point for substrate.

It belongs to the diaminopimelate epimerase family. As to quaternary structure, homodimer.

Its subcellular location is the cytoplasm. The catalysed reaction is (2S,6S)-2,6-diaminopimelate = meso-2,6-diaminopimelate. It functions in the pathway amino-acid biosynthesis; L-lysine biosynthesis via DAP pathway; DL-2,6-diaminopimelate from LL-2,6-diaminopimelate: step 1/1. Functionally, catalyzes the stereoinversion of LL-2,6-diaminopimelate (L,L-DAP) to meso-diaminopimelate (meso-DAP), a precursor of L-lysine and an essential component of the bacterial peptidoglycan. This is Diaminopimelate epimerase from Bradyrhizobium diazoefficiens (strain JCM 10833 / BCRC 13528 / IAM 13628 / NBRC 14792 / USDA 110).